The primary structure comprises 151 residues: Ubiquitin-conjugating enzyme E2 2 (151 aa).

The disordered stretch occupies residues Met1 to Ala26. The region spanning Thr4–Thr150 is the UBC core domain. Cys88 (glycyl thioester intermediate) is an active-site residue.

Belongs to the ubiquitin-conjugating enzyme family.

It is found in the cytoplasm. Its subcellular location is the nucleus. The enzyme catalyses S-ubiquitinyl-[E1 ubiquitin-activating enzyme]-L-cysteine + [E2 ubiquitin-conjugating enzyme]-L-cysteine = [E1 ubiquitin-activating enzyme]-L-cysteine + S-ubiquitinyl-[E2 ubiquitin-conjugating enzyme]-L-cysteine.. The protein operates within protein modification; protein ubiquitination. Catalyzes the covalent attachment of ubiquitin to other proteins. Plays a role in transcription regulation by catalyzing the monoubiquitination of histone H2B to form H2BK123ub1. H2BK123ub1 gives a specific tag for epigenetic transcriptional activation and is also a prerequisite for H3K4me and H3K79me formation. Also involved in postreplication repair of UV-damaged DNA, in N-end rule-dependent protein degradation and in sporulation. This chain is Ubiquitin-conjugating enzyme E2 2 (UBC2), found in Yarrowia lipolytica (strain CLIB 122 / E 150) (Yeast).